Here is a 39-residue protein sequence, read N- to C-terminus: Antimicrobial peptide CHP1 (39 aa).

Cystine bridges form between C6–C28, C13–C34, and C18–C35.

Functionally, bactericidal activity; inhibits S.aureus and E.coli. The polypeptide is Antimicrobial peptide CHP1 (Gallus gallus (Chicken)).